The following is a 131-amino-acid chain: Small ribosomal subunit protein uS11 (131 aa).

The protein belongs to the universal ribosomal protein uS11 family. Part of the 30S ribosomal subunit. Interacts with proteins S7 and S18. Binds to IF-3.

In terms of biological role, located on the platform of the 30S subunit, it bridges several disparate RNA helices of the 16S rRNA. Forms part of the Shine-Dalgarno cleft in the 70S ribosome. The chain is Small ribosomal subunit protein uS11 from Syntrophotalea carbinolica (strain DSM 2380 / NBRC 103641 / GraBd1) (Pelobacter carbinolicus).